The following is a 147-amino-acid chain: Large ribosomal subunit protein bL9 (147 aa).

It belongs to the bacterial ribosomal protein bL9 family.

In terms of biological role, binds to the 23S rRNA. This chain is Large ribosomal subunit protein bL9, found in Sulfurovum sp. (strain NBC37-1).